The primary structure comprises 512 residues: MEELQGYLEIDRSRQQDFLYPLLFQEYIYALAHDHSLNRSILYEPMENLGYDNKSSSLIVKRFITRMYQQNHLIISANDSNQNKFVGHNKNLDSQTISEGFAIIVEIPFSLRLVSSLEGLEGKGKEIVKSRNLRSIHSIFSFLEDKLSHLNYVSDILIPHPIHPEILVQVLRSWVQDAPSLHLLRLFLHEYRNWTSLITPKKSISIFSKENQRFFLFLYNFHICECESIFVFLRKQSSHLRSTSFRALLERTHFYGKMEHFVVVFRNNFQTILWLVKDPFMHYVRYQGKSFLASKGTPLLMNKWKYYLVNFWQYYFYLWSQPSRIHINQLSNHSLDFLGYLSSVRLNPSVVSSQMLENLYLMDIAIKKFDTIIPIIPLIGSLAKAKFCNVSGHPVSKPVRADSSDSDIIDRFGRICKNLSHYHSGSSKKKSLYRIKYILRLSCARTLARKHKSTVRAFLKRLGSELLEEFFTEEEQVLSLIFPRTSSPSRRLYRKQIWYLDIIRINDLANHE.

It belongs to the intron maturase 2 family. MatK subfamily.

It is found in the plastid. Its subcellular location is the chloroplast. In terms of biological role, usually encoded in the trnK tRNA gene intron. Probably assists in splicing its own and other chloroplast group II introns. This is Maturase K from Platanus occidentalis (Sycamore).